Consider the following 185-residue polypeptide: Ribonuclease HII (185 aa).

The RNase H type-2 domain occupies 1–185; sequence MKICGIDEAG…LKHLQGILEF (185 aa). Positions 7, 8, and 96 each coordinate a divalent metal cation.

The protein belongs to the RNase HII family. It depends on Mn(2+) as a cofactor. Mg(2+) is required as a cofactor.

It localises to the cytoplasm. It carries out the reaction Endonucleolytic cleavage to 5'-phosphomonoester.. Functionally, endonuclease that specifically degrades the RNA of RNA-DNA hybrids. This chain is Ribonuclease HII, found in Campylobacter hominis (strain ATCC BAA-381 / DSM 21671 / CCUG 45161 / LMG 19568 / NCTC 13146 / CH001A).